The following is a 261-amino-acid chain: tRNA pseudouridine synthase A (261 aa).

Aspartate 51 (nucleophile) is an active-site residue. Tyrosine 109 contributes to the substrate binding site.

This sequence belongs to the tRNA pseudouridine synthase TruA family. As to quaternary structure, homodimer.

It carries out the reaction uridine(38/39/40) in tRNA = pseudouridine(38/39/40) in tRNA. Formation of pseudouridine at positions 38, 39 and 40 in the anticodon stem and loop of transfer RNAs. In Shewanella denitrificans (strain OS217 / ATCC BAA-1090 / DSM 15013), this protein is tRNA pseudouridine synthase A.